The chain runs to 424 residues: Subtilisin-like protease 2 (424 aa).

A signal peptide spans 1–17; it reads MQLLNLGLLLLLPFVAG. The propeptide occupies 18-123; it reads EIAPQPEPLR…VHPDQHVYLA (106 aa). Residues 37–123 enclose the Inhibitor I9 domain; it reads QYIVTLKEGL…VHPDQHVYLA (87 aa). The Peptidase S8 domain maps to 132 to 424; sequence RWGLGYMSSK…RKFTLPKNTK (293 aa). Active-site charge relay system residues include aspartate 170 and histidine 202. Residues asparagine 249, asparagine 262, and asparagine 350 are each glycosylated (N-linked (GlcNAc...) asparagine). The Charge relay system role is filled by serine 359. N-linked (GlcNAc...) asparagine glycosylation is present at asparagine 390.

This sequence belongs to the peptidase S8 family.

Its subcellular location is the secreted. Functionally, secreted subtilisin-like serine protease with keratinolytic activity that contributes to pathogenicity. This chain is Subtilisin-like protease 2 (SUB2), found in Arthroderma otae (Microsporum canis).